The sequence spans 613 residues: Transcription factor MTB1 (613 aa).

Residues 48–130 (LQNKLSDLVE…RVLQKLHMLF (83 aa)) form a JAZ-interaction domain region. Disordered stretches follow at residues 256 to 285 (EKNE…FGHD) and 391 to 441 (AHNV…AERQ). Polar residues predominate over residues 260–270 (GNNPRLSNSGA). 2 stretches are compositionally biased toward basic and acidic residues: residues 394 to 417 (VESE…DEKR) and 427 to 441 (NGRE…AERQ). A basic motif; degenerate region spans residues 430–443 (EEPLNHVEAERQRR). The 50-residue stretch at 430–479 (EEPLNHVEAERQRREKLNQRFYALRAVVPNISKMDKASLLGDAIAYITEL) folds into the bHLH domain. Positions 444–479 (EKLNQRFYALRAVVPNISKMDKASLLGDAIAYITEL) are helix-loop-helix motif. Positions 490 to 513 (RELRLGSTSRDAITSEDSPSSEIQ) are disordered. The span at 495 to 512 (GSTSRDAITSEDSPSSEI) shows a compositional bias: polar residues.

Interacts with MYC2 (via N-terminus). MTB1 competes with MED25 for binding to MYC2. Interacts (via N-terminus) with JAZ7.

The protein resides in the nucleus. In terms of biological role, transcription factor that negatively regulates jasmonate (JA) signaling. Negatively regulates JA-dependent response to wounding, JA-induced expression of defense genes, JA-dependent responses against herbivorous insects, and JA-dependent resistance against Botrytis cinerea infection. Plays a positive role in resistance against the bacterial pathogen Pseudomonas syringae pv tomato DC3000. In Solanum lycopersicum (Tomato), this protein is Transcription factor MTB1.